The following is a 463-amino-acid chain: MSKASDAVREPLVDKNMAGSKPDQPWMVYLSTFVAVCGSFAFGSCAGYSSPAQAAIRNDLSLTIAEFSLFGSLLTFGAMIGAITSGPIADLVGRKGAMRVSSAFCVVGWLAIIFAKGVVALDLGRLATGYGMGAFSYVVPIFIAEIAPKTFRGALTTLNQILICTGVSVSFIIGTLVTWRVLALIGIIPCAASFLGLFFIPESPRWLAKVGRDTEFEAALRKLRGKKADISEEAAEIQDYIETLERLPKAKMLDLFQRRYIRSVLIAFGLMVFQQFGGINGICFYTSSIFEQAGFPTRLGMIIYAVLQVVITALNAPIVDRAGRKPLLLVSATGLVIGCLIAAVSFYLKVHDMAHEAVPVLAVVGIMVYIGSFSAGMGAMPWVVMSEIFPINIKGVAGGMATLVNWFGAWAVSYTFNFLMSWSSYGTFLIYAAINALAIVFVIAIVPETKGKTLEQIQAIVNP.

Transmembrane regions (helical) follow at residues 26 to 46 (WMVYLSTFVAVCGSFAFGSCA), 69 to 89 (LFGSLLTFGAMIGAITSGPIA), 103 to 123 (AFCVVGWLAIIFAKGVVALDL), 126 to 146 (LATGYGMGAFSYVVPIFIAEI), 157 to 177 (TLNQILICTGVSVSFIIGTLV), 181 to 201 (VLALIGIIPCAASFLGLFFIP), 264 to 284 (VLIAFGLMVFQQFGGINGICF), 299 to 319 (LGMIIYAVLQVVITALNAPIV), 327 to 347 (LLLVSATGLVIGCLIAAVSFY), 357 to 377 (AVPVLAVVGIMVYIGSFSAGM), 396 to 416 (VAGGMATLVNWFGAWAVSYTF), and 426 to 446 (GTFLIYAAINALAIVFVIAIV).

This sequence belongs to the major facilitator superfamily. Sugar transporter (TC 2.A.1.1) family.

The protein localises to the membrane. Its function is as follows. Sugar transporter. The sequence is that of Sugar transporter ERD6-like 7 from Arabidopsis thaliana (Mouse-ear cress).